Reading from the N-terminus, the 78-residue chain is Small ribosomal subunit protein bS18 (78 aa).

It belongs to the bacterial ribosomal protein bS18 family. As to quaternary structure, part of the 30S ribosomal subunit. Forms a tight heterodimer with protein bS6.

In terms of biological role, binds as a heterodimer with protein bS6 to the central domain of the 16S rRNA, where it helps stabilize the platform of the 30S subunit. In Kocuria rhizophila (strain ATCC 9341 / DSM 348 / NBRC 103217 / DC2201), this protein is Small ribosomal subunit protein bS18.